The following is a 343-amino-acid chain: F17b-G fimbrial adhesin (343 aa).

Residues 1 to 22 (MTNFYKVFLAVFILVCCNISHA) form the signal peptide. The segment at 23-199 (VVSFIGSTEN…LNPFTLNDTV (177 aa)) is receptor-binding lectin domain. A carbohydrate-binding positions include 65-66 (AN), 110-111 (DT), and 138-141 (STQG). A disulfide bond links cysteine 75 and cysteine 132. The tract at residues 200–343 (TSCRLLTPSA…GISTFTFSYQ (144 aa)) is fimbrillin-binding domain. Positions 287–307 (LKFGPDSPVKGNENQWQLSTG) are disordered. The segment covering 298–307 (NENQWQLSTG) has biased composition (polar residues).

The protein belongs to the fimbrial protein family.

Its subcellular location is the fimbrium. Its function is as follows. Essential fimbrial adhesion factor that mediates binding to N-acetylglucosamine-containing receptors in the host intestinal microvilli, leading to colonization of the intestinal tissue, and diarrhea or septicemia. Also confers adhesiveness to laminin and basement membranes. The chain is F17b-G fimbrial adhesin (f17bG) from Escherichia coli.